The following is a 467-amino-acid chain: Probable glutamate decarboxylase gamma (467 aa).

Residue Lys-278 is modified to N6-(pyridoxal phosphate)lysine.

It belongs to the group II decarboxylase family. Pyridoxal 5'-phosphate serves as cofactor.

It carries out the reaction L-glutamate + H(+) = 4-aminobutanoate + CO2. This Listeria monocytogenes serovar 1/2a (strain ATCC BAA-679 / EGD-e) protein is Probable glutamate decarboxylase gamma.